Consider the following 286-residue polypeptide: tRNA (guanine-N(7)-)-methyltransferase (286 aa).

Phosphoserine occurs at positions 7 and 59. S-adenosyl-L-methionine contacts are provided by residues glycine 103, glutamate 126–isoleucine 127, asparagine 161–alanine 162, and cysteine 181. Aspartate 184 is an active-site residue. Position 259–261 (threonine 259–glutamate 261) interacts with S-adenosyl-L-methionine.

This sequence belongs to the class I-like SAM-binding methyltransferase superfamily. TrmB family. Forms a complex with TRM82.

The protein resides in the nucleus. It carries out the reaction guanosine(46) in tRNA + S-adenosyl-L-methionine = N(7)-methylguanosine(46) in tRNA + S-adenosyl-L-homocysteine. The protein operates within tRNA modification; N(7)-methylguanine-tRNA biosynthesis. In terms of biological role, methyltransferase that catalyzes the formation of N(7)-methylguanine at position 46 (m7G46) in tRNA, a modification required to maintain stability of tRNAs; its absence resulting in tRNA decay. Both the D-stem and T-stem structures of tRNAs are required for efficient methyltransferase activity. This Saccharomyces cerevisiae (strain YJM789) (Baker's yeast) protein is tRNA (guanine-N(7)-)-methyltransferase.